The chain runs to 505 residues: Exoglucanase 1 (505 aa).

The signal sequence occupies residues 1 to 17 (MYRKLAVISAFLAAARA). Glutamine 18 carries the pyrrolidone carboxylic acid modification. A catalytic region spans residues 18 to 449 (QQVCTQQAET…GSTGGNTGSN (432 aa)). 4 disulfides stabilise this stretch: cysteine 21–cysteine 88, cysteine 36–cysteine 41, cysteine 66–cysteine 87, and cysteine 77–cysteine 83. Residues asparagine 93 and asparagine 126 are each glycosylated (N-linked (GlcNAc...) asparagine). 6 disulfide bridges follow: cysteine 151–cysteine 410, cysteine 185–cysteine 223, cysteine 189–cysteine 222, cysteine 243–cysteine 269, cysteine 251–cysteine 256, and cysteine 274–cysteine 344. Glutamate 225 (nucleophile) is an active-site residue. Glutamate 230 (proton donor/acceptor) is an active-site residue. Asparagine 283 and asparagine 397 each carry an N-linked (GlcNAc...) asparagine glycan. 2 disordered regions span residues 399–423 (TASTPGAKRGSCSTSSGVPAQVEAQ) and 440–472 (GSTGGNTGSNPPGTSTTRAPPSSTGSSPTATQT). Over residues 409-423 (SCSTSSGVPAQVEAQ) the composition is skewed to polar residues. A compositionally biased stretch (low complexity) spans 447–470 (GSNPPGTSTTRAPPSSTGSSPTAT). The interval 450–468 (PPGTSTTRAPPSSTGSSPT) is linker. In terms of domain architecture, CBM1 spans 469–505 (ATQTHYGQCGGTGWTGPTRCASGYTCQVLNPFYSQCL).

This sequence belongs to the glycosyl hydrolase 7 (cellulase C) family. Post-translationally, O-glycosylated. O-glycosylation of the cellulase linker provides protection from proteolysis. Linker glycans also contribute to binding affinity of cellobiohydrolases to cellulose.

It localises to the secreted. The enzyme catalyses Hydrolysis of (1-&gt;4)-beta-D-glucosidic linkages in cellulose and cellotetraose, releasing cellobiose from the non-reducing ends of the chains.. Functionally, exocellobiohydrolases (CBH) that catalyzes the hydrolysis of 1,4-beta-D-glucosidic bonds in cellulose to release the disaccharide cellobiose. The degradation of cellulose involves an interplay between different cellulolytic enzymes. Hydrolysis starts with endoglucanases (EGs), which cut internal beta-1,4-glucosidic bonds in cellulose to reduce the polymerization degree of the substrate and create new chain ends for exocellobiohydrolases (CBHs). The CBHs release the disaccharide cellobiose from the non-reducing end of the cellulose polymer chain. Finally, beta-1,4-glucosidases hydrolyze the cellobiose and other short cello-oligosaccharides into glucose units. The chain is Exoglucanase 1 (cbh1) from Trichoderma harzianum (Hypocrea lixii).